A 487-amino-acid polypeptide reads, in one-letter code: F-box/LRR-repeat protein At1g48400 (487 aa).

An F-box domain is found at 9-57; the sequence is RDSISNLPDEILGKILSLLPTKVAASTSVLSKRWRNLLGLVDNLCFDES. LRR repeat units lie at residues 71 to 97, 125 to 153, 174 to 199, 225 to 251, 327 to 358, and 359 to 384; these read SLRFCDFVDKTFALLSNSHIKKFSLSR, HLHATPMSFVAIETKLLTSNTLVKLTLSA, SILGDYTNYIRLIDGCPVLEELYMRD, THNPNEMIWHELIYFEAPSLVYLDYSS, TLHLSPDSLEVFHFCCKSMPVFNNLLNLSIES, and NKDKGWQVMPLLLKSCPNLHTLVIKG.

This is F-box/LRR-repeat protein At1g48400 from Arabidopsis thaliana (Mouse-ear cress).